The primary structure comprises 165 residues: Lipoprotein signal peptidase (165 aa).

The next 3 membrane-spanning stretches (helical) occupy residues 9-29 (PFLW…LAVV), 65-85 (WQKY…LFFL), and 97-119 (TGYA…HGFV). Catalysis depends on residues D121 and D139. A helical transmembrane segment spans residues 134–154 (VFNVADIAICIGAGLLAIDAF).

This sequence belongs to the peptidase A8 family.

It is found in the cell inner membrane. It catalyses the reaction Release of signal peptides from bacterial membrane prolipoproteins. Hydrolyzes -Xaa-Yaa-Zaa-|-(S,diacylglyceryl)Cys-, in which Xaa is hydrophobic (preferably Leu), and Yaa (Ala or Ser) and Zaa (Gly or Ala) have small, neutral side chains.. It participates in protein modification; lipoprotein biosynthesis (signal peptide cleavage). In terms of biological role, this protein specifically catalyzes the removal of signal peptides from prolipoproteins. The polypeptide is Lipoprotein signal peptidase (Histophilus somni (strain 2336) (Haemophilus somnus)).